The sequence spans 144 residues: Nucleoside diphosphate kinase (144 aa).

6 residues coordinate ATP: Lys-11, Phe-59, Arg-87, Thr-93, Arg-104, and Asn-114. His-117 functions as the Pros-phosphohistidine intermediate in the catalytic mechanism.

The protein belongs to the NDK family. Homotetramer. Mg(2+) is required as a cofactor.

It is found in the cytoplasm. It catalyses the reaction a 2'-deoxyribonucleoside 5'-diphosphate + ATP = a 2'-deoxyribonucleoside 5'-triphosphate + ADP. The enzyme catalyses a ribonucleoside 5'-diphosphate + ATP = a ribonucleoside 5'-triphosphate + ADP. Its function is as follows. Major role in the synthesis of nucleoside triphosphates other than ATP. The ATP gamma phosphate is transferred to the NDP beta phosphate via a ping-pong mechanism, using a phosphorylated active-site intermediate. In Aliivibrio fischeri (strain MJ11) (Vibrio fischeri), this protein is Nucleoside diphosphate kinase.